The following is a 579-amino-acid chain: V-type ATP synthase alpha chain (579 aa).

227–234 (GGFGTGKT) contacts ATP.

It belongs to the ATPase alpha/beta chains family.

The catalysed reaction is ATP + H2O + 4 H(+)(in) = ADP + phosphate + 5 H(+)(out). Produces ATP from ADP in the presence of a proton gradient across the membrane. The V-type alpha chain is a catalytic subunit. The chain is V-type ATP synthase alpha chain from Anaeromyxobacter dehalogenans (strain 2CP-C).